Here is a 250-residue protein sequence, read N- to C-terminus: Acetylglutamate kinase (250 aa).

Substrate is bound by residues 41-42 (GG), arginine 63, and asparagine 156.

It belongs to the acetylglutamate kinase family. ArgB subfamily.

It is found in the cytoplasm. It carries out the reaction N-acetyl-L-glutamate + ATP = N-acetyl-L-glutamyl 5-phosphate + ADP. Its pathway is amino-acid biosynthesis; L-arginine biosynthesis; N(2)-acetyl-L-ornithine from L-glutamate: step 2/4. Its function is as follows. Catalyzes the ATP-dependent phosphorylation of N-acetyl-L-glutamate. This chain is Acetylglutamate kinase, found in Listeria monocytogenes serotype 4a (strain HCC23).